Here is a 161-residue protein sequence, read N- to C-terminus: MVKSCSVGWGAKVAAVFAALYTSILGLAVLIPHANSAIEVFSAVMAAGLGILIALLAVPFISEITDKTETLEVEVIGEVVVEDSLSFGGANAGLKSERIFVADKGLVIDGYLFEWQKIKFEIEKDEIILRLPSGRRLPIPYSEELAEMLRKSKTSYFIDTK.

Transmembrane regions (helical) follow at residues 13-35 (VAAVFAALYTSILGLAVLIPHAN) and 40-62 (VFSAVMAAGLGILIALLAVPFIS).

It is found in the cell membrane. This is an uncharacterized protein from Archaeoglobus fulgidus (strain ATCC 49558 / DSM 4304 / JCM 9628 / NBRC 100126 / VC-16).